The sequence spans 200 residues: MTRLILATRNAGKITELRAILADAGLTHDLVGADAYPDIPDVKETGVTFAENALLKAHALARATGLPAVADDSGLCVDVLGGAPGIFSARWSGRHGDDRANLDLLLAQLSDISEAHRGAHFACAAALALPDGTERVVEGQLRGTLRHTPTGTNGFGYDPVLQPEGETRTCAELSAEEKNAISHRGKAFRELVPVVRELLG.

8-13 (TRNAGK) is a binding site for substrate. The Proton acceptor role is filled by Asp-72. Position 72 (Asp-72) interacts with Mg(2+). Substrate contacts are provided by residues Ser-73, 155–158 (FGYD), Lys-178, and 183–184 (HR).

It belongs to the HAM1 NTPase family. As to quaternary structure, homodimer. Requires Mg(2+) as cofactor.

The catalysed reaction is XTP + H2O = XMP + diphosphate + H(+). It carries out the reaction dITP + H2O = dIMP + diphosphate + H(+). The enzyme catalyses ITP + H2O = IMP + diphosphate + H(+). Functionally, pyrophosphatase that catalyzes the hydrolysis of nucleoside triphosphates to their monophosphate derivatives, with a high preference for the non-canonical purine nucleotides XTP (xanthosine triphosphate), dITP (deoxyinosine triphosphate) and ITP. Seems to function as a house-cleaning enzyme that removes non-canonical purine nucleotides from the nucleotide pool, thus preventing their incorporation into DNA/RNA and avoiding chromosomal lesions. The polypeptide is dITP/XTP pyrophosphatase (Streptomyces avermitilis (strain ATCC 31267 / DSM 46492 / JCM 5070 / NBRC 14893 / NCIMB 12804 / NRRL 8165 / MA-4680)).